A 339-amino-acid polypeptide reads, in one-letter code: Anthranilate phosphoribosyltransferase (339 aa).

Residues Gly-79, 82 to 83 (GD), Ser-87, 89 to 92 (NIST), 107 to 115 (KHGNRSISS), and Ser-119 contribute to the 5-phospho-alpha-D-ribose 1-diphosphate site. Residue Gly-79 participates in anthranilate binding. Residue Ser-91 participates in Mg(2+) binding. Asn-110 contributes to the anthranilate binding site. Arg-165 contacts anthranilate. Mg(2+)-binding residues include Asp-224 and Glu-225.

Belongs to the anthranilate phosphoribosyltransferase family. As to quaternary structure, homodimer. It depends on Mg(2+) as a cofactor.

It carries out the reaction N-(5-phospho-beta-D-ribosyl)anthranilate + diphosphate = 5-phospho-alpha-D-ribose 1-diphosphate + anthranilate. Its pathway is amino-acid biosynthesis; L-tryptophan biosynthesis; L-tryptophan from chorismate: step 2/5. In terms of biological role, catalyzes the transfer of the phosphoribosyl group of 5-phosphorylribose-1-pyrophosphate (PRPP) to anthranilate to yield N-(5'-phosphoribosyl)-anthranilate (PRA). The sequence is that of Anthranilate phosphoribosyltransferase from Listeria innocua serovar 6a (strain ATCC BAA-680 / CLIP 11262).